We begin with the raw amino-acid sequence, 889 residues long: Cytoplasmic aconitate hydratase (889 aa).

Residues Gln86 and 205–207 (DSH) contribute to the substrate site. [4Fe-4S] cluster is bound by residues Cys437, Cys503, and Cys506. Substrate is bound by residues Arg536, Arg541, Arg699, and 779 to 780 (SR).

Belongs to the aconitase/IPM isomerase family. Interacts (when associated with the 4Fe-4S) with FBXL5. Interacts with frataxin(81-210). It depends on [4Fe-4S] cluster as a cofactor.

Its subcellular location is the cytoplasm. It localises to the cytosol. The catalysed reaction is citrate = D-threo-isocitrate. In terms of biological role, bifunctional iron sensor that switches between 2 activities depending on iron availability. Iron deprivation, promotes its mRNA binding activity through which it regulates the expression of genes involved in iron uptake, sequestration and utilization. Binds to iron-responsive elements (IRES) in the untranslated region of target mRNAs preventing for instance the translation of ferritin and aminolevulinic acid synthase and stabilizing the transferrin receptor mRNA. Conversely, when cellular iron levels are high, binds a 4Fe-4S cluster which precludes RNA binding activity and promotes the aconitase activity, the isomerization of citrate to isocitrate via cis-aconitate. The polypeptide is Cytoplasmic aconitate hydratase (ACO1) (Bos taurus (Bovine)).